A 45-amino-acid chain; its full sequence is uncharacterized protein (45 aa).

The span at 1–26 (MIMGKDRQEKKLKASGRVESDRDQSI) shows a compositional bias: basic and acidic residues. Residues 1–45 (MIMGKDRQEKKLKASGRVESDRDQSIHYDGATSLEQNGRFKKRKS) form a disordered region.

This is an uncharacterized protein from Bacillus subtilis (strain 168).